The sequence spans 333 residues: 2-oxoglutarate-dependent dioxygenase ucsF (333 aa).

Positions Asn174 to Ala296 constitute a Fe2OG dioxygenase domain. 3 residues coordinate Fe cation: His202, Asp204, and His264. 2-oxoglutarate is bound at residue Arg287.

It belongs to the iron/ascorbate-dependent oxidoreductase family. It depends on Fe(2+) as a cofactor.

It functions in the pathway mycotoxin biosynthesis. 2-oxoglutarate-dependent dioxygenase; part of the gene cluster that mediates the biosynthesis of UCS1025A, a member of the pyrrolizidinone family that acts as a strong telomerase inhibitor and displays potent antibacterial and antitumor properties. These compounds share a hemiaminal-containing pyrrolizidinone core fused with a gamma-lactone, giving a furopyrrolizidine that is connected to a decalin fragment. The polyketide synthase module (PKS) of the PKS-NRPS ucsA is responsible for the synthesis of the polyketide backbone via the condensation of an acetyl-CoA starter unit with 6 malonyl-CoA units. The downstream nonribosomal peptide synthetase (NRPS) module then amidates the carboxyl end of the polyketide with a 2S,3S-methylproline derived from L-isoleucine by the 2-oxoglutarate-dependent dioxygenase ucsF which converts L-isoleucine to (4S,5S)-4-methylpyrroline-5-carboxylate that is further converted to 2S,3S-methylproline by the pyrroline-5-carboxylate reductase ucsG. Reductive release of the completed aminoacyl polyketide from the assembly line can form the 3-pyrrolin-2-one structure via an intramolecular Knoevenagel reaction. Because ucsA lacks a designated enoylreductase (ER) domain, the required activity is provided the enoyl reductase ucsL. This keto acyclic precursor is the substrate of the Diels-Alderase ucsH, that catalyzes the Diels-Alder cycloaddition. Oxidation of the 3S-methyl group to a carboxylate by the cytochrome P450 monooxygenase ucsK allows an oxa-Michael cyclization that might involve the reductase/dehydrogenase ucsI and which furnishes the furopyrrolizidine. The oxidase ucsJ likely plays a critical role in stereoselective reduction of the C5-C6 double bond to afford the required R-configured carboxylate group. Further enolization and oxidation at C5 by an unidentified enzyme affords the last intermediate that can undergo oxa-Michael cyclization to yield UCS1025A. The polypeptide is 2-oxoglutarate-dependent dioxygenase ucsF (Acremonium sp).